Here is a 247-residue protein sequence, read N- to C-terminus: Triosephosphate isomerase (247 aa).

8–10 provides a ligand contact to substrate; sequence NWK. His95 functions as the Electrophile in the catalytic mechanism. Residue Glu162 is the Proton acceptor of the active site. Residues Gly168 and Ser207 each contribute to the substrate site.

It belongs to the triosephosphate isomerase family. Homodimer.

It localises to the cytoplasm. The catalysed reaction is D-glyceraldehyde 3-phosphate = dihydroxyacetone phosphate. It participates in carbohydrate biosynthesis; gluconeogenesis. The protein operates within carbohydrate degradation; glycolysis; D-glyceraldehyde 3-phosphate from glycerone phosphate: step 1/1. Involved in the gluconeogenesis. Catalyzes stereospecifically the conversion of dihydroxyacetone phosphate (DHAP) to D-glyceraldehyde-3-phosphate (G3P). This is Triosephosphate isomerase from Gluconacetobacter diazotrophicus (strain ATCC 49037 / DSM 5601 / CCUG 37298 / CIP 103539 / LMG 7603 / PAl5).